The following is a 635-amino-acid chain: Probable Xaa-Pro aminopeptidase P (635 aa).

Mn(2+)-binding residues include Asp432, Asp443, Glu541, and Glu555.

This sequence belongs to the peptidase M24B family. Mn(2+) is required as a cofactor.

It carries out the reaction Release of any N-terminal amino acid, including proline, that is linked to proline, even from a dipeptide or tripeptide.. Catalyzes the removal of a penultimate prolyl residue from the N-termini of peptides. The sequence is that of Probable Xaa-Pro aminopeptidase P (AMPP) from Arthroderma gypseum (strain ATCC MYA-4604 / CBS 118893) (Microsporum gypseum).